Here is a 1198-residue protein sequence, read N- to C-terminus: MAEHPPLLDTTQILSSDISLLSAPIVSADGTQQVILVQVNPGEAFTIRREDGQFQCITGPAQVPMMSPNGSVPPIYVPPGYAPQVIEDNGVRRVVVVPQAPEFHPGSHTVLHRSPHPPLPGFIPVPTMMPPPPRHMYSPVTGAGDMTTQYMPQYQSSQVYGDVDAHSTHGRSNFRDERSSKTYERLQKKLKDRQGTQKDKMSSPPSSPQKCPSPINEHNGLIKGQIAGGINTGSAKIKSGKGKGGTQVDTEIEEKDEETKAFEALLSNIVKPVASDIQARTVVLTWSPPSSLINGETDESSVPELYGYEVLISSTGKDGKYKSVYVGEETNITLNDLKPAMDYHAKVQAEYNSIKGTPSEAEIFTTLSCEPDIPNPPRIANRTKNSLTLQWKAPSDNGSKIQNFVLEWDEGKGNGEFCQCYMGSQKQFKITKLSPAMGCKFRLSARNDYGTSGFSEEVLYYTSGCAPSMPASPVLTKAGITWLSLQWSKPSGTPSDEGISYILEMEEETSGYGFKPKYDGEDLAYTVKNLRRSTKYKFKVIAYNSEGKSNPSEVVEFTTCPDKPGIPVKPSVKGKIHSHSFKITWDPPKDNGGATINKYVVEMAEGSNGNKWEMIYSGATREHLCDRLNPGCFYRLRVYCISDGGQSAVSESLLVQTPAVPPGPCLPPRLQGRPKAKEIQLRWGPPLVDGGSPISCYSVEMSPIEKDEPREVYQGSEVECTVSSLLPGKTYSFRLRAANKMGFGPFSEKCDITTAPGPPDQCKPPQVTCRSATCAQVNWEVPLSNGTDVTEYRLEWGGVEGSMQICYCGPGLSYEIKGLSPATTYYCRVQALSVVGAGPFSEVVACVTPPSVPGIVTCLQEISDDEIENPHYSPSTCLAISWEKPCDHGSEILAYSIDFGDKQSLTVGKVTSYIINNLQPDTTYRIRIQALNSLGAGPFSHMIKLKTKPLPPDPPRLECVAFSHQNLKLKWGEGTPKTLSTDSIQYHLQMEDKNGRFVSLYRGPCHTYKVQRLNESTSYKFCIQACNEAGEGPLSQEYIFTTPKSVPAALKAPKIEKVNDHICEITWECLQPMKGDPVIYSLQVMLGKDSEFKQIYKGPDSSFRYSSLQLNCEYRFRVCAIRQCQDSLGHQDLVGPYSTTVLFISQRTEPPASTNRDTVESTRTRRALSDEQCAAVILVLFAFFSILIAFIIQYFVIK.

Residues 160–221 (YGDVDAHSTH…PSPINEHNGL (62 aa)) form a disordered region. Over residues 163–201 (VDAHSTHGRSNFRDERSSKTYERLQKKLKDRQGTQKDKM) the composition is skewed to basic and acidic residues. Residues 202–214 (SSPPSSPQKCPSP) are compositionally biased toward low complexity. Phosphoserine is present on residues Ser203, Ser207, and Ser213. Fibronectin type-III domains lie at 268–369 (NIVK…TLSC), 373–465 (IPNP…TSGC), 469–562 (MPAS…TCPD), 566–660 (IPVK…TPAV), 664–757 (PCLP…TAPG), 761–851 (QCKP…TPPS), 861–950 (EISD…TKPL), 951–1045 (PPDP…TPKS), and 1046–1151 (VPAA…TEPP). Lys384 carries the post-translational modification N6-acetyllysine. Residues 1177 to 1197 (ILVLFAFFSILIAFIIQYFVI) form a helical membrane-spanning segment.

Belongs to the FNDC3 family. Expressed in the odontoblast and nerves in the dental pulp. Also expressed in trachea and to a lesser extent in the brain, liver, lung and kidney.

It is found in the golgi apparatus membrane. Mediates spermatid-Sertoli adhesion during spermatogenesis. The chain is Fibronectin type-III domain-containing protein 3A (FNDC3A) from Homo sapiens (Human).